The chain runs to 318 residues: Type II restriction enzyme HaeIII (318 aa).

It carries out the reaction Endonucleolytic cleavage of DNA to give specific double-stranded fragments with terminal 5'-phosphates.. A P subtype restriction enzyme that recognizes the double-stranded sequence 5'-GGCC-3' and cleaves after G-2. The chain is Type II restriction enzyme HaeIII (haeIIIR) from Haemophilus aegyptius.